The following is a 591-amino-acid chain: Aspartate--tRNA(Asp/Asn) ligase (591 aa).

E170 contacts L-aspartate. An aspartate region spans residues Q194–K197. R216 provides a ligand contact to L-aspartate. ATP is bound by residues R216 to E218 and Q225. An L-aspartate-binding site is contributed by H448. An ATP-binding site is contributed by E482. Residue R489 coordinates L-aspartate. G534–R537 is an ATP binding site. The disordered stretch occupies residues G559 to H591. Basic and acidic residues predominate over residues Q574–H591.

Belongs to the class-II aminoacyl-tRNA synthetase family. Type 1 subfamily. Homodimer.

The protein localises to the cytoplasm. The enzyme catalyses tRNA(Asx) + L-aspartate + ATP = L-aspartyl-tRNA(Asx) + AMP + diphosphate. Aspartyl-tRNA synthetase with relaxed tRNA specificity since it is able to aspartylate not only its cognate tRNA(Asp) but also tRNA(Asn). Reaction proceeds in two steps: L-aspartate is first activated by ATP to form Asp-AMP and then transferred to the acceptor end of tRNA(Asp/Asn). The chain is Aspartate--tRNA(Asp/Asn) ligase from Mycobacterium avium (strain 104).